The sequence spans 303 residues: D-alanyl-D-alanine carboxypeptidase (303 aa).

A helical membrane pass occupies residues 7–23 (LLLLLFLIYLGYDYVNE). Positions 37–56 (DQNPKEHLENSGTSENTQEK) are disordered. Substrate is bound by residues 154 to 156 (YAL) and Ser-161. Zn(2+) is bound by residues His-163 and Asp-170. Glu-213 serves as the catalytic Proton donor/acceptor. Residue His-216 coordinates Zn(2+).

The protein belongs to the peptidase M15B family. It depends on Zn(2+) as a cofactor.

Its subcellular location is the cell membrane. The DD-carboxypeptidase activity is not inhibited by beta-lactam antibiotics. Functionally, cleaves the C-terminal D-alanine residue of UDP-muramyl-pentapeptide (UDP-MurNAc-L-Ala-D-Glu-mDAP-D-Ala-D-Ala) or diacetyl-L-Lys-D-Ala-D-Ala. However the physiological substrate likely contains L-Lys instead of mDAP at the third position of the pentapeptide. Also releases the C-terminal D-lactate from UDP-MurNAc-L-Ala-D-Glu-mDAP-D-Ala-D-lactate, a depsipeptide produced by the vancomycin resistance protein VanA. Therefore, VanY should contribute in vivo to the hydrolysis of both the D-alanyl-D-alanine- and the depsipeptide-containing peptidoglycan precursors. Is not necessary for vancomycin resistance of E.faecium BM4147 and perhaps not W14-9. Does not display transpeptidase or beta-lactamase activities. This is D-alanyl-D-alanine carboxypeptidase from Enterococcus faecium (Streptococcus faecium).